The sequence spans 429 residues: Divergent protein kinase domain 2A (429 aa).

An N-terminal signal peptide occupies residues 1–34; that stretch reads MLRLASLKFGRLFRYAKVLFAASLLVVMLLNTHS.

This sequence belongs to the DIPK family.

It is found in the cytoplasmic vesicle. Its subcellular location is the COPI-coated vesicle. It localises to the golgi apparatus. The protein resides in the secreted. In terms of biological role, may play a role in cardiomyocyte proliferation through paracrine signaling and activation of the PPI3K-AKT-CDK7 signaling cascade. The protein is Divergent protein kinase domain 2A (dipk2a) of Xenopus tropicalis (Western clawed frog).